A 68-amino-acid chain; its full sequence is DNA-directed RNA polymerase subunit omega (68 aa).

This sequence belongs to the RNA polymerase subunit omega family. As to quaternary structure, the RNAP catalytic core consists of 2 alpha, 1 beta, 1 beta' and 1 omega subunit. When a sigma factor is associated with the core the holoenzyme is formed, which can initiate transcription.

The enzyme catalyses RNA(n) + a ribonucleoside 5'-triphosphate = RNA(n+1) + diphosphate. In terms of biological role, promotes RNA polymerase assembly. Latches the N- and C-terminal regions of the beta' subunit thereby facilitating its interaction with the beta and alpha subunits. The protein is DNA-directed RNA polymerase subunit omega of Geobacter sp. (strain M21).